The following is a 34-amino-acid chain: Protamine-Y1/Y2 (34 aa).

The segment at 1-34 is disordered; that stretch reads PRRRRQASRPVRRRRRYRRSTAARRRRRVVRRRR.

Testis.

The protein resides in the nucleus. It is found in the chromosome. In terms of biological role, protamines substitute for histones in the chromatin of sperm during the haploid phase of spermatogenesis. They compact sperm DNA into a highly condensed, stable and inactive complex. The sequence is that of Protamine-Y1/Y2 from Thunnus thynnus (Atlantic bluefin tuna).